The sequence spans 230 residues: MAQGLIEVERKFLPGPGTEERLQELGGTLEHRVTFRDTYYDTPELSLMQADHWLRRREDSGWELKCPGAAGVLGHHTEYKELTAEPTIVAQLCKVLGADGLGAGDVAAVLDPLGLQEVASFVTKRSAWKLVLLGTDEEEPQLKVDLGTADFGYAVGEVEALVHEEAEVPAALEKIHRLSSMLGVPAQETAPAKLIVYLQRFRPQNYQRLLEVNSSKQRPQATEDPDNCLG.

An N-acetylalanine modification is found at Ala-2. The region spanning 5–201 is the CYTH domain; that stretch reads LIEVERKFLP…AKLIVYLQRF (197 aa). Positions 7 and 9 each coordinate Mg(2+). Positions 11, 55, 57, 65, and 125 each coordinate substrate. Mg(2+)-binding residues include Asp-145, Glu-157, and Glu-159. Glu-157 is a substrate binding site. Lys-193 is a binding site for substrate.

This sequence belongs to the ThTPase family. As to quaternary structure, monomer. Mg(2+) serves as cofactor.

Its subcellular location is the cytoplasm. The catalysed reaction is thiamine triphosphate + H2O = thiamine diphosphate + phosphate + H(+). Hydrolase highly specific for thiamine triphosphate (ThTP). This Macaca fascicularis (Crab-eating macaque) protein is Thiamine-triphosphatase (THTPA).